A 62-amino-acid polypeptide reads, in one-letter code: Large ribosomal subunit protein uL29 (62 aa).

This sequence belongs to the universal ribosomal protein uL29 family.

The protein is Large ribosomal subunit protein uL29 of Ruthia magnifica subsp. Calyptogena magnifica.